Consider the following 186-residue polypeptide: Acetyltransferase PA2578 (186 aa).

The N-acetyltransferase domain occupies 12–176 (LQLVPFQLGH…NVVLMGLLRQ (165 aa)). CoA contacts are provided by residues Gln-37, 97–99 (IVL), Gly-105, Asn-137, and 142–144 (HLY).

Homodimer.

Its function is as follows. Catalyzes the transfer of an acetyl group from acetyl coenzyme A (AcCoA) to an acceptor substrate and releases both CoA and the acetylated product. It prefers the antibiotic chloramphenicol. This chain is Acetyltransferase PA2578, found in Pseudomonas aeruginosa (strain ATCC 15692 / DSM 22644 / CIP 104116 / JCM 14847 / LMG 12228 / 1C / PRS 101 / PAO1).